Reading from the N-terminus, the 313-residue chain is Probable cell division protein WhiA (313 aa).

Residues S277–E311 constitute a DNA-binding region (H-T-H motif).

It belongs to the WhiA family.

Functionally, involved in cell division and chromosome segregation. This is Probable cell division protein WhiA from Lactobacillus johnsonii (strain CNCM I-12250 / La1 / NCC 533).